The primary structure comprises 193 residues: Holliday junction branch migration complex subunit RuvA (193 aa).

Positions 1-64 are domain I; it reads MIGRIAGVLL…EDAHLLYGFG (64 aa). Residues 65 to 139 form a domain II region; it reads TAEERSTFRE…GKIGADLGAM (75 aa). The interval 139–143 is flexible linker; it reads MAGAA. A domain III region spans residues 144–193; the sequence is SASDHASDILNALLALGYSEKEALTAVKNVPAGTGVSEGIKLALKALSKG.

The protein belongs to the RuvA family. Homotetramer. Forms an RuvA(8)-RuvB(12)-Holliday junction (HJ) complex. HJ DNA is sandwiched between 2 RuvA tetramers; dsDNA enters through RuvA and exits via RuvB. An RuvB hexamer assembles on each DNA strand where it exits the tetramer. Each RuvB hexamer is contacted by two RuvA subunits (via domain III) on 2 adjacent RuvB subunits; this complex drives branch migration. In the full resolvosome a probable DNA-RuvA(4)-RuvB(12)-RuvC(2) complex forms which resolves the HJ.

The protein resides in the cytoplasm. Functionally, the RuvA-RuvB-RuvC complex processes Holliday junction (HJ) DNA during genetic recombination and DNA repair, while the RuvA-RuvB complex plays an important role in the rescue of blocked DNA replication forks via replication fork reversal (RFR). RuvA specifically binds to HJ cruciform DNA, conferring on it an open structure. The RuvB hexamer acts as an ATP-dependent pump, pulling dsDNA into and through the RuvAB complex. HJ branch migration allows RuvC to scan DNA until it finds its consensus sequence, where it cleaves and resolves the cruciform DNA. This Paraburkholderia phytofirmans (strain DSM 17436 / LMG 22146 / PsJN) (Burkholderia phytofirmans) protein is Holliday junction branch migration complex subunit RuvA.